Reading from the N-terminus, the 260-residue chain is GTP cyclohydrolase FolE2 (260 aa).

Belongs to the GTP cyclohydrolase IV family.

The enzyme catalyses GTP + H2O = 7,8-dihydroneopterin 3'-triphosphate + formate + H(+). Its pathway is cofactor biosynthesis; 7,8-dihydroneopterin triphosphate biosynthesis; 7,8-dihydroneopterin triphosphate from GTP: step 1/1. In terms of biological role, converts GTP to 7,8-dihydroneopterin triphosphate. This is GTP cyclohydrolase FolE2 from Desulfovibrio desulfuricans (strain ATCC 27774 / DSM 6949 / MB).